Here is a 663-residue protein sequence, read N- to C-terminus: Zinc finger protein GLI2 (663 aa).

Positions 159 to 186 are disordered; sequence ISSNSNCISDSSQSKQSSESAVSSTVNP. The segment covering 160–182 has biased composition (low complexity); sequence SSNSNCISDSSQSKQSSESAVSS. 5 C2H2-type zinc fingers span residues 234–259, 267–294, 300–324, 330–355, and 361–386; these read TNCHWEGCTKEYDTQEQLVHHINNDH, FVCRWQDCTREQKPFKAQYMLVVHMRRH, HKCTFEGCSKAYSRLENLKTHLRSH, YVCEHEGCNKAFSNASDRAKHQNRTH, and YVCKIPGCTKRYTDPSSLRKHVKTVH. Disordered regions lie at residues 374 to 440, 452 to 481, 544 to 578, and 619 to 663; these read DPSS…MEDC, VMCQSSPGGQSSCSSEPSPLGSTNNNDSGV, CSWVNPAPQGRNTKLPPISGNGSILENSGGSSRTL, and SGIS…DIKL. The segment covering 386–402 has biased composition (basic and acidic residues); that stretch reads HGPDAHVTKKQRNDVHP. Over residues 456–473 the composition is skewed to low complexity; the sequence is SSPGGQSSCSSEPSPLGS. Composition is skewed to polar residues over residues 563–578 and 619–647; these read GNGSILENSGGSSRTL and SGISPYFSSRRSSEASQLGHRPNNTSSAD.

The protein belongs to the GLI C2H2-type zinc-finger protein family.

It localises to the nucleus. The protein localises to the cytoplasm. It is found in the cell projection. The protein resides in the cilium. Functionally, functions as a transcription regulator in the hedgehog (Hh) pathway. Functions as a transcriptional activator. May also function as transcriptional repressor. Binds to the DNA sequence 5'-GAACCACCCA-3'. Is involved in the smoothened (SHH) signaling pathway. Required for normal skeleton development. The polypeptide is Zinc finger protein GLI2 (Gallus gallus (Chicken)).